Consider the following 372-residue polypeptide: 4-hydroxy-3-methylbut-2-en-1-yl diphosphate synthase (flavodoxin) (372 aa).

Positions 270, 273, 305, and 312 each coordinate [4Fe-4S] cluster.

The protein belongs to the IspG family. [4Fe-4S] cluster is required as a cofactor.

It carries out the reaction (2E)-4-hydroxy-3-methylbut-2-enyl diphosphate + oxidized [flavodoxin] + H2O + 2 H(+) = 2-C-methyl-D-erythritol 2,4-cyclic diphosphate + reduced [flavodoxin]. Its pathway is isoprenoid biosynthesis; isopentenyl diphosphate biosynthesis via DXP pathway; isopentenyl diphosphate from 1-deoxy-D-xylulose 5-phosphate: step 5/6. Its function is as follows. Converts 2C-methyl-D-erythritol 2,4-cyclodiphosphate (ME-2,4cPP) into 1-hydroxy-2-methyl-2-(E)-butenyl 4-diphosphate. This Salmonella typhi protein is 4-hydroxy-3-methylbut-2-en-1-yl diphosphate synthase (flavodoxin).